Reading from the N-terminus, the 316-residue chain is Ornithine carbamoyltransferase (316 aa).

Carbamoyl phosphate contacts are provided by residues 59-62 (STRT), Gln-86, Arg-110, and 137-140 (HPCQ). L-ornithine contacts are provided by residues Asn-168, Asp-232, and 236-237 (SM). Carbamoyl phosphate is bound by residues 273–274 (CL) and Arg-301.

Belongs to the aspartate/ornithine carbamoyltransferase superfamily. OTCase family.

It localises to the cytoplasm. It catalyses the reaction carbamoyl phosphate + L-ornithine = L-citrulline + phosphate + H(+). Its pathway is amino-acid biosynthesis; L-arginine biosynthesis; L-arginine from L-ornithine and carbamoyl phosphate: step 1/3. Its function is as follows. Reversibly catalyzes the transfer of the carbamoyl group from carbamoyl phosphate (CP) to the N(epsilon) atom of ornithine (ORN) to produce L-citrulline. The sequence is that of Ornithine carbamoyltransferase (argF) from Listeria monocytogenes serovar 1/2a (strain ATCC BAA-679 / EGD-e).